The following is a 1400-amino-acid chain: DNA-directed RNA polymerase subunit beta' (1400 aa).

Residues C70, C72, C85, and C88 each contribute to the Zn(2+) site. D460, D462, and D464 together coordinate Mg(2+). C814, C889, C896, and C899 together coordinate Zn(2+).

This sequence belongs to the RNA polymerase beta' chain family. The RNAP catalytic core consists of 2 alpha, 1 beta, 1 beta' and 1 omega subunit. When a sigma factor is associated with the core the holoenzyme is formed, which can initiate transcription. Mg(2+) is required as a cofactor. Zn(2+) serves as cofactor.

It catalyses the reaction RNA(n) + a ribonucleoside 5'-triphosphate = RNA(n+1) + diphosphate. DNA-dependent RNA polymerase catalyzes the transcription of DNA into RNA using the four ribonucleoside triphosphates as substrates. This is DNA-directed RNA polymerase subunit beta' from Alcanivorax borkumensis (strain ATCC 700651 / DSM 11573 / NCIMB 13689 / SK2).